The sequence spans 357 residues: Chorismate synthase (357 aa).

Residues 38 to 49 show a composition bias toward basic and acidic residues; the sequence is EKDIQPDLDRRK. The disordered stretch occupies residues 38 to 60; the sequence is EKDIQPDLDRRKPGTSRYTTPRR. Residues Arg48 and Arg54 each contribute to the NADP(+) site. Residues 125-127, 243-244, Gly283, 298-302, and Arg324 contribute to the FMN site; these read RSS, NA, and KPTSS.

It belongs to the chorismate synthase family. In terms of assembly, homotetramer. Requires FMNH2 as cofactor.

The enzyme catalyses 5-O-(1-carboxyvinyl)-3-phosphoshikimate = chorismate + phosphate. The protein operates within metabolic intermediate biosynthesis; chorismate biosynthesis; chorismate from D-erythrose 4-phosphate and phosphoenolpyruvate: step 7/7. Functionally, catalyzes the anti-1,4-elimination of the C-3 phosphate and the C-6 proR hydrogen from 5-enolpyruvylshikimate-3-phosphate (EPSP) to yield chorismate, which is the branch point compound that serves as the starting substrate for the three terminal pathways of aromatic amino acid biosynthesis. This reaction introduces a second double bond into the aromatic ring system. The chain is Chorismate synthase from Haemophilus influenzae (strain PittEE).